A 424-amino-acid polypeptide reads, in one-letter code: UPF0597 protein Shewmr7_2876 (424 aa).

Belongs to the UPF0597 family.

This chain is UPF0597 protein Shewmr7_2876, found in Shewanella sp. (strain MR-7).